A 533-amino-acid polypeptide reads, in one-letter code: DNA-directed RNA polymerase III subunit RPC3 (533 aa).

The segment at 161-183 (PLVPDTDSSDPGPPPPAPNLVIN) is disordered. Position 194 is a phosphoserine (S194). The interval 197–228 (GKGKRRRSSDEDAAGEPKAKKPRCTDNEEPTP) is disordered. Basic and acidic residues predominate over residues 211–222 (GEPKAKKPRCTD).

The protein belongs to the eukaryotic RPC3/POLR3C RNA polymerase subunit family. As to quaternary structure, component of the RNA polymerase III complex consisting of 17 subunits: a ten-subunit horseshoe-shaped catalytic core composed of POLR3A/RPC1, POLR3B/RPC2, POLR1C/RPAC1, POLR1D/RPAC2, POLR3K/RPC10, POLR2E/RPABC1, POLR2F/RPABC2, POLR2H/RPABC3, POLR2K/RPABC4 and POLR2L/RPABC5; a mobile stalk composed of two subunits POLR3H/RPC8 and CRCP/RPC9, protruding from the core and functioning primarily in transcription initiation; and additional subunits homologous to general transcription factors of the RNA polymerase II machinery, POLR3C/RPC3-POLR3F/RPC6-POLR3G/RPC7 heterotrimer required for transcription initiation and POLR3D/RPC4-POLR3E/RPC5 heterodimer involved in both transcription initiation and termination. Directly interacts with POLR3G/RPC7 and POLR3GL. Directly interacts with POLR3F/RPC6. Interacts with GTF3C4. As part of the RNA polymerase III complex, interacts with PKP2.

It localises to the nucleus. In terms of biological role, DNA-dependent RNA polymerase catalyzes the transcription of DNA into RNA using the four ribonucleoside triphosphates as substrates. Specific peripheric component of RNA polymerase III (Pol III) which synthesizes small non-coding RNAs including 5S rRNA, snRNAs, tRNAs and miRNAs from at least 500 distinct genomic loci. Part of POLR3C/RPC3-POLR3F/RPC6-POLR3G/RPC7 heterotrimer, coordinates the dynamics of Pol III stalk and clamp modules during the transition from apo to elongation state. Pol III plays a key role in sensing and limiting infection by intracellular bacteria and DNA viruses. Acts as a nuclear and cytosolic DNA sensor involved in innate immune response. Can sense non-self dsDNA that serves as template for transcription into dsRNA. The non-self RNA polymerase III transcripts, such as Epstein-Barr virus-encoded RNAs (EBERs) induce type I interferon and NF-kappa-B through the RIG-I pathway. Preferentially binds single-stranded DNA (ssDNA) in a sequence-independent manner. This chain is DNA-directed RNA polymerase III subunit RPC3, found in Rattus norvegicus (Rat).